The following is a 316-amino-acid chain: HPr kinase/phosphorylase (316 aa).

Residues His-143 and Lys-164 contribute to the active site. 158–165 provides a ligand contact to ATP; the sequence is GEAGSGKS. Ser-165 contacts Mg(2+). Asp-182 functions as the Proton acceptor; for phosphorylation activity. Proton donor; for dephosphorylation activity in the catalytic mechanism. Residues 206–215 are important for the catalytic mechanism of both phosphorylation and dephosphorylation; sequence LEVRGLGVLN. Glu-207 contributes to the Mg(2+) binding site. Arg-251 is a catalytic residue. Residues 272–277 form an important for the catalytic mechanism of dephosphorylation region; sequence PVMPGR.

The protein belongs to the HPrK/P family. In terms of assembly, homohexamer. It depends on Mg(2+) as a cofactor.

It carries out the reaction [HPr protein]-L-serine + ATP = [HPr protein]-O-phospho-L-serine + ADP + H(+). It catalyses the reaction [HPr protein]-O-phospho-L-serine + phosphate + H(+) = [HPr protein]-L-serine + diphosphate. Catalyzes the ATP- as well as the pyrophosphate-dependent phosphorylation of a specific serine residue in HPr, a phosphocarrier protein of the phosphoenolpyruvate-dependent sugar phosphotransferase system (PTS). HprK/P also catalyzes the pyrophosphate-producing, inorganic phosphate-dependent dephosphorylation (phosphorolysis) of seryl-phosphorylated HPr (P-Ser-HPr). In Stenotrophomonas maltophilia (strain R551-3), this protein is HPr kinase/phosphorylase.